The primary structure comprises 236 residues: uncharacterized protein (236 aa).

The first 26 residues, 1–26, serve as a signal peptide directing secretion; it reads MTNTWNRLALLIFAVLSLLVAGELQA.

Belongs to the periplasmic pilus chaperone family.

The protein localises to the periplasm. Its function is as follows. Part of the elfADCG-ycbUVF fimbrial operon, which promotes adhesion of bacteria to different abiotic surfaces. Could be required for the biogenesis of fimbriae. This is an uncharacterized protein from Escherichia coli (strain K12).